The primary structure comprises 275 residues: MTLQQQIIKALGAKPQINAEEEIRRSIDFLKSYLQTYPFIKSLVLGISGGQDSTLAGKLCQMAINELRLETGNESLQFIAVRLPYGVQADEQDCQDAIAFIQPDRVLTVNIKGAVLASEQALREAGIELSDFVRGNEKARERMKAQYSIAGMTSGVVVGTDHAAEAITGFFTKYGDGGTDINPLYRLNKRQGKQLLAALGCPEHLYKKAPTADLEDDRPSLPDEVALGVTYDNIDDYLEGKNVPEQVARTIENWYLKTEHKRRPPITVFDDFWKK.

46–53 is an ATP binding site; it reads GISGGQDS. Aspartate 52 contributes to the Mg(2+) binding site. Arginine 140 contributes to the deamido-NAD(+) binding site. Position 160 (threonine 160) interacts with ATP. Glutamate 165 serves as a coordination point for Mg(2+). Deamido-NAD(+) is bound by residues lysine 173 and aspartate 180. ATP is bound by residues lysine 189 and threonine 211. A deamido-NAD(+)-binding site is contributed by 260–261; the sequence is HK.

It belongs to the NAD synthetase family. In terms of assembly, homodimer.

The catalysed reaction is deamido-NAD(+) + NH4(+) + ATP = AMP + diphosphate + NAD(+) + H(+). It functions in the pathway cofactor biosynthesis; NAD(+) biosynthesis; NAD(+) from deamido-NAD(+) (ammonia route): step 1/1. Its function is as follows. Catalyzes the ATP-dependent amidation of deamido-NAD to form NAD. Uses ammonia as a nitrogen source. The protein is NH(3)-dependent NAD(+) synthetase of Escherichia coli O139:H28 (strain E24377A / ETEC).